A 694-amino-acid chain; its full sequence is Elongation factor G (694 aa).

One can recognise a tr-type G domain in the interval Glu8–Thr287. GTP is bound by residues Ala17 to Thr24, Asp86 to His90, and Asn140 to Asp143.

It belongs to the TRAFAC class translation factor GTPase superfamily. Classic translation factor GTPase family. EF-G/EF-2 subfamily.

The protein resides in the cytoplasm. In terms of biological role, catalyzes the GTP-dependent ribosomal translocation step during translation elongation. During this step, the ribosome changes from the pre-translocational (PRE) to the post-translocational (POST) state as the newly formed A-site-bound peptidyl-tRNA and P-site-bound deacylated tRNA move to the P and E sites, respectively. Catalyzes the coordinated movement of the two tRNA molecules, the mRNA and conformational changes in the ribosome. In Brucella canis (strain ATCC 23365 / NCTC 10854 / RM-666), this protein is Elongation factor G.